A 439-amino-acid chain; its full sequence is MARIFQPKKKTQLNTRHQAVQVERLDHHGAGIAYLKKKPLFIDGALPGEEVVTQLVEEKSKFARGKLIKILKPSDARVEPFCPHYHECGGCDLQHLNYDQQLTHKQQTLRQLMRKFAGSDIDLDAPVLGESLGYRRRARVSLFVDKKTRQLHFGFRKKQSKQIAQVTDCPVLAPELNVLLPEIYSVLKAFKKPDQLGHVELVLGDNGPCITLRHLSNLADDEVSALVELATRHQASLYLMPETDQLNLVAGEVPFYQEAGVKIPFDPNNFIQVNQAVNQKMVEQAIKWLDPQSDERVLDLFCGLGNFSLPIAKRAKHVVGVEGVAEMVEKASNNASLNQINNAQFYHANLEQDFDGQAWAAEKFDKVLLDPARAGASGIIDQVSALGAQRVVYVSCNPATLARDSQSLLDQGYQLTKLGMLDMFPHTSHLESMALFEKS.

The TRAM domain occupies 10 to 69 (KTQLNTRHQAVQVERLDHHGAGIAYLKKKPLFIDGALPGEEVVTQLVEEKSKFARGKLIK). [4Fe-4S] cluster is bound by residues Cys-82, Cys-88, Cys-91, and Cys-169. Residues Gln-272, Phe-301, Asn-306, Glu-322, Asn-349, and Asp-370 each contribute to the S-adenosyl-L-methionine site. The Nucleophile role is filled by Cys-396.

Belongs to the class I-like SAM-binding methyltransferase superfamily. RNA M5U methyltransferase family. RlmD subfamily.

The catalysed reaction is uridine(1939) in 23S rRNA + S-adenosyl-L-methionine = 5-methyluridine(1939) in 23S rRNA + S-adenosyl-L-homocysteine + H(+). Catalyzes the formation of 5-methyl-uridine at position 1939 (m5U1939) in 23S rRNA. The protein is 23S rRNA (uracil(1939)-C(5))-methyltransferase RlmD of Vibrio parahaemolyticus serotype O3:K6 (strain RIMD 2210633).